The primary structure comprises 683 residues: Methionine--tRNA ligase (683 aa).

The 'HIGH' region signature appears at 23–33 (PYANGSAHIGH). Positions 154, 157, 166, and 170 each coordinate Zn(2+). Residues 335–339 (KFSKS) carry the 'KMSKS' region motif. Residue lysine 338 coordinates ATP. Positions 583–683 (DFAKMELRVG…KPSEPGTKVR (101 aa)) constitute a tRNA-binding domain.

Belongs to the class-I aminoacyl-tRNA synthetase family. MetG type 1 subfamily. As to quaternary structure, homodimer. It depends on Zn(2+) as a cofactor.

Its subcellular location is the cytoplasm. The enzyme catalyses tRNA(Met) + L-methionine + ATP = L-methionyl-tRNA(Met) + AMP + diphosphate. Is required not only for elongation of protein synthesis but also for the initiation of all mRNA translation through initiator tRNA(fMet) aminoacylation. This Methanocella arvoryzae (strain DSM 22066 / NBRC 105507 / MRE50) protein is Methionine--tRNA ligase.